The sequence spans 358 residues: Alanine racemase (358 aa).

Lys34 serves as the catalytic Proton acceptor; specific for D-alanine. Lys34 carries the post-translational modification N6-(pyridoxal phosphate)lysine. Arg129 serves as a coordination point for substrate. The Proton acceptor; specific for L-alanine role is filled by Tyr254. Residue Met302 coordinates substrate.

This sequence belongs to the alanine racemase family. The cofactor is pyridoxal 5'-phosphate.

The enzyme catalyses L-alanine = D-alanine. Its pathway is amino-acid biosynthesis; D-alanine biosynthesis; D-alanine from L-alanine: step 1/1. In terms of biological role, catalyzes the interconversion of L-alanine and D-alanine. May also act on other amino acids. This chain is Alanine racemase (alr), found in Vibrio vulnificus (strain CMCP6).